Here is a 124-residue protein sequence, read N- to C-terminus: Large ribosomal subunit protein bL20c (124 aa).

The protein belongs to the bacterial ribosomal protein bL20 family.

Its subcellular location is the plastid. It is found in the chloroplast. In terms of biological role, binds directly to 23S ribosomal RNA and is necessary for the in vitro assembly process of the 50S ribosomal subunit. It is not involved in the protein synthesizing functions of that subunit. The chain is Large ribosomal subunit protein bL20c (rpl20) from Euglena gracilis.